We begin with the raw amino-acid sequence, 220 residues long: Large ribosomal subunit protein uL3 (220 aa).

The segment at 113–143 is disordered; sequence GTTKGHGYQGNIHKDGQRRGPMAHGSRYHRR.

It belongs to the universal ribosomal protein uL3 family. As to quaternary structure, part of the 50S ribosomal subunit. Forms a cluster with proteins L14 and L19.

Functionally, one of the primary rRNA binding proteins, it binds directly near the 3'-end of the 23S rRNA, where it nucleates assembly of the 50S subunit. The polypeptide is Large ribosomal subunit protein uL3 (Limosilactobacillus fermentum (strain NBRC 3956 / LMG 18251) (Lactobacillus fermentum)).